The primary structure comprises 3623 residues: MMNMSLPFLWSLLTLLIFAEVNGEAGELELQRQKRSINLQQPRMATERGNLVFLTGSAQNIEFRTGSLGKIKLNDEDLSECLHQIQKNKEDIIELKGSAIGLPQNISSQIYQLNSKLVDLERKFQGLQQTVDKKVCSSNPCQNGGTCLNLHDSFFCICPPQWKGPLCSADVNECEIYSGTPLSCQNGGTCVNTMGSYSCHCPPETYGPQCASKYDDCEGGSVARCVHGICEDLMREQAGEPKYSCVCDAGWMFSPNSPACTLDRDECSFQPGPCSTLVQCFNTQGSFYCGACPTGWQGNGYICEDINECEINNGGCSVAPPVECVNTPGSSHCQACPPGYQGDGRVCTLTDICSVSNGGCHPDASCSSTLGSLPLCTCLPGYTGNGYGPNGCVQLSNICLSHPCLNGQCIDTVSGYFCKCDSGWTGVNCTENINECLSNPCLNGGTCVDGVDSFSCECTRLWTGALCQVPQQVCGESLSGINGSFSYRSPDVGYVHDVNCFWVIKTEMGKVLRITFTFFRLESMDNCPHEFLQVYDGDSSSAFQLGRFCGSSLPHELLSSDNALYFHLYSEHLRNGRGFTVRWETQQPECGGILTGPYGSIKSPGYPGNYPPGRDCVWIVVTSPDLLVTFTFGTLSLEHHDDCNKDYLEIRDGPLYQDPLLGKFCTTFSVPPLQTTGPFARIHFHSDSQISDQGFHITYLTSPSDLRCGGNYTDPEGELFLPELSGPFTHTRQCVYMMKQPQGEQIQINFTHVELQCQSDSSQNYIEVRDGETLLGKVCGNGTISHIKSITNSVWIRFKIDASVEKASFRAVYQVACGDELTGEGVIRSPFFPNVYPGERTCRWTIHQPQSQVILLNFTVFEIGSSAHCETDYVEIGSSSILGSPENKKYCGTDIPSFITSVYNFLYVTFVKSSSTENHGFMAKFSAEDLACGEILTESTGTIQSPGHPNVYPHGINCTWHILVQPNHLIHLMFETFHLEFHYNCTNDYLEVYDTDSETSLGRYCGKSIPPSLTSSGNSLMLVFVTDSDLAYEGFLINYEAISAATACLQDYTDDLGTFTSPNFPNNYPNNWECIYRITVRTGQLIAVHFTNFSLEEAIGNYYTDFLEIRDGGYEKSPLLGIFYGSNLPPTIISHSNKLWLKFKSDQIDTRSGFSAYWDGSSTGCGGNLTTSSGTFISPNYPMPYYHSSECYWWLKSSHGSAFELEFKDFHLEHHPNCTLDYLAVYDGPSSNSHLLTQLCGDEKPPLIRSSGDSMFIKLRTDEGQQGRGFKAEYRQTCENVVIVNQTYGILESIGYPNPYSENQHCNWTIRATTGNTVNYTFLAFDLEHHINCSTDYLELYDGPRQMGRYCGVDLPPPGSTTSSKLQVLLLTDGVGRREKGFQMQWFVYGCGGELSGATGSFSSPGFPNRYPPNKECIWYIRTDPGSSIQLTIHDFDVEYHSRCNFDVLEIYGGPDFHSPRIAQLCTQRSPENPMQVSSTGNELAIRFKTDLSINGRGFNASWQAVTGGCGGIFQAPSGEIHSPNYPSPYRSNTDCSWVIRVDRNHRVLLNFTDFDLEPQDSCIMAYDGLSSTMSRLARTCGREQLANPIVSSGNSLFLRFQSGPSRQNRGFRAQFRQACGGHILTSSFDTVSSPRFPANYPNNQNCSWIIQAQPPLNHITLSFTHFELERSTTCARDFVEILDGGHEDAPLRGRYCGTDMPHPITSFSSALTLRFVSDSSISAGGFHTTVTASVSACGGTFYMAEGIFNSPGYPDIYPPNVECVWNIVSSPGNRLQLSFISFQLEDSQDCSRDFVEIREGNATGHLVGRYCGNSFPLNYSSIVGHTLWVRFISDGSGSGTGFQATFMKIFGNDNIVGTHGKVASPFWPENYPHNSNYQWTVNVNASHVVHGRILEMDIEEIQNCYYDKLRIYDGPSIHARLIGAYCGTQTESFSSTGNSLTFHFYSDSSISGKGFLLEWFAVDAPDGVLPTIAPGACGGFLRTGDAPVFLFSPGWPDSYSNRVDCTWLIQAPDSTVELNILSLDIESHRTCAYDSLVIRDGDNNLAQQLAVLCGREIPGPIRSTGEYMFIRFTSDSSVTRAGFNASFHKSCGGYLHADRGIITSPKYPETYPSNLNCSWHVLVQSGLTIAVHFEQPFQIPNGDSSCNQGDYLVLRNGPDICSPPLGPPGGNGHFCGSHASSTLFTSDNQMFVQFISDHSNEGQGFKIKYEAKSLACGGNVYIHDADSAGYVTSPNHPHNYPPHADCIWILAAPPETRIQLQFEDRFDIEVTPNCTSNYLELRDGVDSDAPILSKFCGTSLPSSQWSSGEVMYLRFRSDNSPTHVGFKAKYSIAQCGGRVPGQSGVVESIGHPTLPYRDNLFCEWHLQGLSGHYLTISFEDFNLQNSSGCEKDFVEIWDNHTSGNILGRYCGNTIPDSIDTSSNTAVVRFVTDGSVTASGFRLRFESSMEECGGDLQGSIGTFTSPNYPNPNPHGRICEWRITAPEGRRITLMFNNLRLATHPSCNNEHVIVFNGIRSNSPQLEKLCSSVNVSNEIKSSGNTMKVIFFTDGSRPYGGFTASYTSSEDAVCGGSLPNTPEGNFTSPGYDGVRNYSRNLNCEWTLSNPNQGNSSISIHFEDFYLESHQDCQFDVLEFRVGDADGPLMWRLCGPSKPTLPLVIPYSQVWIHFVTNERVEHIGFHAKYSFTDCGGIQIGDSGVITSPNYPNAYDSLTHCSSLLEAPQGHTITLTFSDFDIEPHTTCAWDSVTVRNGGSPESPIIGQYCGNSNPRTIQSGSNQLVVTFNSDHSLQGGGFYATWNTQTLGCGGIFHSDNGTIRSPHWPQNFPENSRCSWTAITHKSKHLEISFDNNFLIPSGDGQCQNSFVKVWAGTEEVDKALLATGCGNVAPGPVITPSNTFTAVFQSQEAPAQGFSASFVSRCGSNFTGPSGYIISPNYPKQYDNNMNCTYVIEANPLSVVLLTFVSFHLEARSAVTGSCVNDGVHIIRGYSVMSTPFATVCGDEMPAPLTIAGPVLLNFYSNEQITDFGFKFSYRIISCGGVFNFSSGIITSPAYSYADYPNDMHCLYTITVSDDKVIELKFSDFDVVPSTSCSHDYLAIYDGANTSDPLLGKFCGSKRPPNVKSSNNSMLLVFKTDSFQTAKGWKMSFRQTLGPQQGCGGYLTGSNNTFASPDSDSNGMYDKNLNCVWIIIAPVNKVIHLTFNTFALEAASTRQRCLYDYVKLYDGDSENANLAGTFCGSTVPAPFISSGNFLTVQFISDLTLEREGFNATYTIMDMPCGGTYNATWTPQNISSPNSSDPDVPFSICTWVIDSPPHQQVKITVWALQLTSQDCTQNYLQLQDSPQGHGNSRFQFCGRNASAVPVFYSSMSTAMVIFKSGVVNRNSRMSFTYQIADCNRDYHKAFGNLRSPGWPDNYDNDKDCTVTLTAPQNHTISLFFHSLGIENSVECRNDFLEVRNGSNSNSPLLGKYCGTLLPNPVFSQNNELYLRFKSDSVTSDRGYEIIWTSSPSGCGGTLYGDRGSFTSPGYPGTYPNNTYCEWVLVAPAGRLVTINFYFISIDDPGDCVQNYLTLYDGPNASSPSSGPYCGGDTSIAPFVASSNQVFIKFHADYARRPSAFRLTWDS.

The signal sequence occupies residues 1–23 (MMNMSLPFLWSLLTLLIFAEVNG). A propeptide spans 24–35 (EAGELELQRQKR) (removed in mature form). The tract at residues 42–49 (PRMATERG) is interaction with AMN. The N-linked (GlcNAc...) asparagine glycan is linked to Asn-105. Residues 132 to 168 (DKKVCSSNPCQNGGTCLNLHDSFFCICPPQWKGPLCS) enclose the EGF-like 1 domain. 9 disulfide bridges follow: Cys-136–Cys-147, Cys-141–Cys-156, Cys-158–Cys-167, Cys-174–Cys-190, Cys-184–Cys-199, Cys-201–Cys-210, Cys-267–Cys-280, Cys-274–Cys-289, and Cys-292–Cys-303. One can recognise an EGF-like 2; calcium-binding domain in the interval 170 to 211 (DVNECEIYSGTPLSCQNGGTCVNTMGSYSCHCPPETYGPQCA). Residues 263–304 (DRDECSFQPGPCSTLVQCFNTQGSFYCGACPTGWQGNGYICE) form the EGF-like 3; calcium-binding domain. Positions 305–348 (DINECEINNGGCSVAPPVECVNTPGSSHCQACPPGYQGDGRVCT) constitute an EGF-like 4; calcium-binding domain. EGF-like domains lie at 349-385 (LTDI…YTGN) and 395-430 (LSNI…VNCT). 13 disulfide bridges follow: Cys-353–Cys-366, Cys-360–Cys-376, Cys-399–Cys-409, Cys-404–Cys-418, Cys-420–Cys-429, Cys-436–Cys-447, Cys-441–Cys-456, Cys-458–Cys-467, Cys-474–Cys-500, Cys-527–Cys-549, Cys-590–Cys-616, Cys-643–Cys-665, and Cys-708–Cys-734. N-linked (GlcNAc...) asparagine glycosylation is present at Asn-428. Residues 432–468 (NINECLSNPCLNGGTCVDGVDSFSCECTRLWTGALCQ) enclose the EGF-like 7; calcium-binding domain. CUB domains lie at 474-586 (CGES…WETQ), 590-702 (CGGI…YLTS), 708-816 (CGGN…YQVA), 816-928 (ACGD…FSAE), 932-1042 (CGEI…YEAI), 1048-1161 (CLQD…WDGS), 1165-1277 (CGGN…YRQT), 1278-1389 (CENV…WFVY), 1391-1506 (CGGE…WQAV), 1510-1619 (CGGI…FRQA), 1620-1734 (CGGH…VTAS), 1738-1850 (CGGT…FMKI), 1852-1963 (GNDN…WFAV), 1978-2091 (CGGF…FHKS), 2092-2213 (CGGY…YEAK), 2217-2334 (CGGN…YSIA), 2336-2448 (CGGR…FESS), 2452-2565 (CGGD…YTSS), 2570-2687 (CGGS…YSFT), 2689-2801 (CGGI…WNTQ), 2805-2919 (CGGI…FVSR), 2920-3035 (CGSN…YRII), 3037-3150 (CGGV…FRQT), 3157-3274 (CGGY…YTIM), 3278-3393 (CGGT…YQIA), 3395-3507 (CNRD…WTSS), and 3511-3623 (CGGT…TWDS). Residue Asn-482 is glycosylated (N-linked (GlcNAc...) asparagine). Asn-711, Asn-749, Asn-781, and Asn-857 each carry an N-linked (GlcNAc...) asparagine glycan. 2 disulfide bridges follow: Cys-869/Cys-891 and Cys-932/Cys-958. A glycan (N-linked (GlcNAc...) asparagine) is linked at Asn-957. Glu-980 is a Ca(2+) binding site. Asn-984 carries an N-linked (GlcNAc...) asparagine glycan. An intrachain disulfide couples Cys-985 to Cys-1005. Residues Asp-988, Asp-1027, Asp-1029, and Leu-1030 each coordinate Ca(2+). Cys-1048 and Cys-1074 are oxidised to a cystine. N-linked (GlcNAc...) asparagine glycosylation is present at Asn-1092. 5 residues coordinate Ca(2+): Glu-1096, Asp-1105, Asp-1146, Ile-1148, and Asp-1149. The cysteines at positions 1165 and 1191 are disulfide-linked. A glycan (N-linked (GlcNAc...) asparagine) is linked at Asn-1168. Glu-1213 contributes to the Ca(2+) binding site. Asn-1217 carries an N-linked (GlcNAc...) asparagine glycan. Cys-1218 and Cys-1240 are disulfide-bonded. Ca(2+) is bound by residues Asp-1221, Asp-1262, Gly-1264, and Gln-1265. Cys-1278 and Cys-1306 are disulfide-bonded. N-linked (GlcNAc...) asparagine glycans are attached at residues Asn-1285, Asn-1307, and Asn-1319. Glu-1328 contributes to the Ca(2+) binding site. The N-linked (GlcNAc...) asparagine glycan is linked to Asn-1332. Cys-1333 and Cys-1351 are joined by a disulfide. Positions 1336, 1373, and 1375 each coordinate Ca(2+). 2 disulfide bridges follow: Cys-1391/Cys-1417 and Cys-1444/Cys-1466. Asn-1500 is a glycosylation site (N-linked (GlcNAc...) asparagine). A disulfide bridge links Cys-1510 with Cys-1536. Asn-1551 carries N-linked (GlcNAc...) asparagine glycosylation. Cystine bridges form between Cys-1563–Cys-1581, Cys-1620–Cys-1647, Cys-1675–Cys-1697, Cys-1738–Cys-1764, and Cys-1791–Cys-1812. The N-linked (GlcNAc...) asparagine glycan is linked to Asn-1646. N-linked (GlcNAc...) asparagine glycans are attached at residues Asn-1802, Asn-1819, and Asn-1885. 3 disulfides stabilise this stretch: Cys-1905/Cys-1927, Cys-1978/Cys-2006, and Cys-2032/Cys-2054. 2 N-linked (GlcNAc...) asparagine glycosylation sites follow: Asn-2085 and Asn-2117. 2 disulfide bridges follow: Cys-2092–Cys-2118 and Cys-2217–Cys-2247. An N-linked (GlcNAc...) asparagine glycan is attached at Asn-2274. 2 disulfide bridges follow: Cys-2275-Cys-2297 and Cys-2336-Cys-2363. N-linked (GlcNAc...) asparagine glycans are attached at residues Asn-2386 and Asn-2400. 3 disulfides stabilise this stretch: Cys-2390-Cys-2411, Cys-2452-Cys-2478, and Cys-2505-Cys-2527. N-linked (GlcNAc...) asparagine glycans are attached at residues Asn-2531, Asn-2581, Asn-2592, and Asn-2610. A disulfide bridge connects residues Cys-2570 and Cys-2599. 7 disulfides stabilise this stretch: Cys-2628-Cys-2649, Cys-2689-Cys-2715, Cys-2742-Cys-2764, Cys-2805-Cys-2831, Cys-2860-Cys-2883, Cys-2920-Cys-2946, and Cys-2977-Cys-2999. Asn-2813 carries an N-linked (GlcNAc...) asparagine glycan. N-linked (GlcNAc...) asparagine glycosylation is found at Asn-2923 and Asn-2945. Thr-3008 bears the Phosphothreonine mark. 2 cysteine pairs are disulfide-bonded: Cys-3037/Cys-3064 and Cys-3091/Cys-3113. 4 N-linked (GlcNAc...) asparagine glycosylation sites follow: Asn-3042, Asn-3103, Asn-3125, and Asn-3165. 2 disulfide bridges follow: Cys-3157-Cys-3185 and Cys-3215-Cys-3237. Residues Asn-3268, Asn-3283, Asn-3290, and Asn-3295 are each glycosylated (N-linked (GlcNAc...) asparagine). Cystine bridges form between Cys-3278–Cys-3306 and Cys-3332–Cys-3354. Asn-3357 carries an N-linked (GlcNAc...) asparagine glycan. The cysteines at positions 3395 and 3421 are disulfide-linked. Residues Asn-3430, Asn-3457, Asn-3533, and Asn-3576 are each glycosylated (N-linked (GlcNAc...) asparagine). 3 disulfide bridges follow: Cys-3448-Cys-3470, Cys-3511-Cys-3537, and Cys-3564-Cys-3586.

As to quaternary structure, interacts with AMN. Component of the cubam complex composed of one CUBN trimer and one AMN chain. The cubam complex can dimerize. Interacts with LRP2 in a dual-receptor complex in a calcium-dependent manner. Found in a complex with PID1/PCLI1, LRP1 and CUBNI. Interacts with LRP1 and PID1/PCLI1. Post-translationally, the precursor is cleaved by a trans-Golgi proteinase furin, removing a propeptide. In terms of processing, N-glycosylated. In terms of tissue distribution, detected in kidney cortex (at protein level). Expressed in kidney proximal tubule cells, placenta, visceral yolk-sac cells and in absorptive intestinal cells. Expressed in the epithelium of intestine and kidney.

The protein localises to the apical cell membrane. It is found in the cell membrane. The protein resides in the membrane. It localises to the coated pit. Its subcellular location is the endosome. The protein localises to the lysosome membrane. In terms of biological role, endocytic receptor which plays a role in lipoprotein, vitamin and iron metabolism by facilitating their uptake. Acts together with LRP2 to mediate endocytosis of high-density lipoproteins, GC, hemoglobin, ALB, TF and SCGB1A1. Acts together with AMN to mediate endocytosis of the CBLIF-cobalamin complex. Binds to ALB, MB, Kappa and lambda-light chains, TF, hemoglobin, GC, SCGB1A1, APOA1, high density lipoprotein, and the CBLIF-cobalamin complex. Ligand binding requires calcium. Serves as important transporter in several absorptive epithelia, including intestine, renal proximal tubules and embryonic yolk sac. May play an important role in the development of the peri-implantation embryo through internalization of APOA1 and cholesterol. Binds to LGALS3 at the maternal-fetal interface. The protein is Cubilin (CUBN) of Homo sapiens (Human).